A 311-amino-acid polypeptide reads, in one-letter code: Malate dehydrogenase (311 aa).

NAD(+)-binding positions include 7 to 13 (GAAGGIG) and Asp34. Residues Arg81 and Arg87 each contribute to the substrate site. Residues Asn94 and 117-119 (ITN) each bind NAD(+). Substrate is bound by residues Asn119 and Arg153. The active-site Proton acceptor is His177. Met227 contributes to the NAD(+) binding site.

Belongs to the LDH/MDH superfamily. MDH type 1 family. In terms of assembly, homodimer.

It carries out the reaction (S)-malate + NAD(+) = oxaloacetate + NADH + H(+). Its function is as follows. Catalyzes the reversible oxidation of malate to oxaloacetate. This is Malate dehydrogenase (mdh) from Vibrio cholerae serotype O1 (strain ATCC 39315 / El Tor Inaba N16961).